We begin with the raw amino-acid sequence, 282 residues long: NH(3)-dependent NAD(+) synthetase (282 aa).

Position 51–58 (51–58 (GISGGVDS)) interacts with ATP. D57 is a binding site for Mg(2+). R148 is a binding site for deamido-NAD(+). T168 serves as a coordination point for ATP. Position 173 (E173) interacts with Mg(2+). Deamido-NAD(+)-binding residues include K181 and D188. ATP-binding residues include K197 and T219. Position 268–269 (268–269 (HK)) interacts with deamido-NAD(+).

The protein belongs to the NAD synthetase family. Homodimer.

It catalyses the reaction deamido-NAD(+) + NH4(+) + ATP = AMP + diphosphate + NAD(+) + H(+). It participates in cofactor biosynthesis; NAD(+) biosynthesis; NAD(+) from deamido-NAD(+) (ammonia route): step 1/1. In terms of biological role, catalyzes the ATP-dependent amidation of deamido-NAD to form NAD. Uses ammonia as a nitrogen source. The polypeptide is NH(3)-dependent NAD(+) synthetase (Burkholderia lata (strain ATCC 17760 / DSM 23089 / LMG 22485 / NCIMB 9086 / R18194 / 383)).